Consider the following 165-residue polypeptide: uncharacterized protein (165 aa).

A helical transmembrane segment spans residues 4–26; it reads FVIGTMIALAGLLVGGGVGSYFT.

Its subcellular location is the membrane. This is an uncharacterized protein from Aquifex aeolicus (strain VF5).